Here is a 284-residue protein sequence, read N- to C-terminus: Sulfotransferase 4A1 (284 aa).

Phosphothreonine occurs at positions 8, 11, and 205.

Belongs to the sulfotransferase 1 family. As to expression, highly expressed in the cerebral cortex and frontal lobe, slightly less in the cerebellum, occipital and temporal lobes, relatively low in the medulla and putamen, and lowest in the spinal cord. No expression detected in the pancreas. Highly expressed in fetal brain and occipital lobe, slightly less in the whole brain, frontal lobe, hippocampus, and lung, very low expression in cerebellum, medulla oblongata, temporal lobe, testis, kidney and appendix.

Its subcellular location is the cytoplasm. Atypical sulfotransferase family member with very low affinity for 3'-phospho-5'-adenylyl sulfate (PAPS) and very low catalytic activity towards L-triiodothyronine, thyroxine, estrone, p-nitrophenol, 2-naphthylamine, and 2-beta-naphthol. May have a role in the metabolism of drugs and neurotransmitters in the CNS. The protein is Sulfotransferase 4A1 (SULT4A1) of Homo sapiens (Human).